Here is a 225-residue protein sequence, read N- to C-terminus: Urease accessory protein UreF (225 aa).

This sequence belongs to the UreF family. UreD, UreF and UreG form a complex that acts as a GTP-hydrolysis-dependent molecular chaperone, activating the urease apoprotein by helping to assemble the nickel containing metallocenter of UreC. The UreE protein probably delivers the nickel.

Its subcellular location is the cytoplasm. Its function is as follows. Required for maturation of urease via the functional incorporation of the urease nickel metallocenter. The polypeptide is Urease accessory protein UreF (Picosynechococcus sp. (strain ATCC 27264 / PCC 7002 / PR-6) (Agmenellum quadruplicatum)).